Reading from the N-terminus, the 803-residue chain is Leucine--tRNA ligase (803 aa).

The short motif at 40 to 51 is the 'HIGH' region element; sequence PYPSGAGLHVGH. A 'KMSKS' region motif is present at residues 575–579; the sequence is KMSKS. Lysine 578 serves as a coordination point for ATP.

This sequence belongs to the class-I aminoacyl-tRNA synthetase family.

The protein resides in the cytoplasm. It catalyses the reaction tRNA(Leu) + L-leucine + ATP = L-leucyl-tRNA(Leu) + AMP + diphosphate. The protein is Leucine--tRNA ligase of Listeria monocytogenes serovar 1/2a (strain ATCC BAA-679 / EGD-e).